The sequence spans 438 residues: Serine hydroxymethyltransferase 1 (438 aa).

(6S)-5,6,7,8-tetrahydrofolate-binding positions include L130 and 134-136 (GHL). K239 carries the post-translational modification N6-(pyridoxal phosphate)lysine.

It belongs to the SHMT family. In terms of assembly, homodimer. Pyridoxal 5'-phosphate serves as cofactor.

The protein resides in the cytoplasm. The enzyme catalyses (6R)-5,10-methylene-5,6,7,8-tetrahydrofolate + glycine + H2O = (6S)-5,6,7,8-tetrahydrofolate + L-serine. It participates in one-carbon metabolism; tetrahydrofolate interconversion. Its pathway is amino-acid biosynthesis; glycine biosynthesis; glycine from L-serine: step 1/1. In terms of biological role, catalyzes the reversible interconversion of serine and glycine with tetrahydrofolate (THF) serving as the one-carbon carrier. This reaction serves as the major source of one-carbon groups required for the biosynthesis of purines, thymidylate, methionine, and other important biomolecules. Also exhibits THF-independent aldolase activity toward beta-hydroxyamino acids, producing glycine and aldehydes, via a retro-aldol mechanism. The chain is Serine hydroxymethyltransferase 1 from Mycobacterium tuberculosis (strain CDC 1551 / Oshkosh).